The primary structure comprises 171 residues: 3-hydroxydecanoyl-[acyl-carrier-protein] dehydratase (171 aa).

Residue H70 is part of the active site.

This sequence belongs to the thioester dehydratase family. FabA subfamily. In terms of assembly, homodimer.

The protein localises to the cytoplasm. The catalysed reaction is a (3R)-hydroxyacyl-[ACP] = a (2E)-enoyl-[ACP] + H2O. The enzyme catalyses (3R)-hydroxydecanoyl-[ACP] = (2E)-decenoyl-[ACP] + H2O. It carries out the reaction (2E)-decenoyl-[ACP] = (3Z)-decenoyl-[ACP]. It participates in lipid metabolism; fatty acid biosynthesis. Functionally, necessary for the introduction of cis unsaturation into fatty acids. Catalyzes the dehydration of (3R)-3-hydroxydecanoyl-ACP to E-(2)-decenoyl-ACP and then its isomerization to Z-(3)-decenoyl-ACP. Can catalyze the dehydratase reaction for beta-hydroxyacyl-ACPs with saturated chain lengths up to 16:0, being most active on intermediate chain length. The protein is 3-hydroxydecanoyl-[acyl-carrier-protein] dehydratase of Xanthomonas oryzae pv. oryzae (strain MAFF 311018).